Consider the following 654-residue polypeptide: Translation factor GUF1, mitochondrial (654 aa).

Residues 57–237 form the tr-type G domain; it reads ENYRNFSIVA…SVIKNIPSPV (181 aa). Residues 66–73, 130–134, and 184–187 contribute to the GTP site; these read AHVDHGKS, DTPGH, and NKID.

Belongs to the TRAFAC class translation factor GTPase superfamily. Classic translation factor GTPase family. LepA subfamily.

It localises to the mitochondrion inner membrane. It catalyses the reaction GTP + H2O = GDP + phosphate + H(+). Functionally, promotes mitochondrial protein synthesis. May act as a fidelity factor of the translation reaction, by catalyzing a one-codon backward translocation of tRNAs on improperly translocated ribosomes. Binds to mitochondrial ribosomes in a GTP-dependent manner. In Candida albicans (strain SC5314 / ATCC MYA-2876) (Yeast), this protein is Translation factor GUF1, mitochondrial.